Consider the following 311-residue polypeptide: Dehydrogenase/reductase SDR family member 7C (311 aa).

The N-terminal stretch at 1 to 18 (MGIMAVLMLPLLLLGVSG) is a signal peptide. NAD(+) is bound by residues S47, L49, Y191, K195, and S226. Residue Y191 is the Proton acceptor of the active site.

The protein belongs to the short-chain dehydrogenases/reductases (SDR) family. Expressed in skeletal muscle, cardiac muscle and skin.

The protein resides in the sarcoplasmic reticulum membrane. The catalysed reaction is all-trans-retinol + NAD(+) = all-trans-retinal + NADH + H(+). Its function is as follows. NADH-dependent oxidoreductase which catalyzes the oxidation of all-trans-retinol to all-trans-retinal. Plays a role in the regulation of cardiac and skeletal muscle metabolic functions. Maintains Ca(2+) intracellular homeostasis by repressing Ca(2+) release from the sarcoplasmic reticulum (SR) in myotubes, possibly through local alternations in NAD/NADH or retinol/retinal. Also plays a role in Ca(2+) homeostasis by controlling Ca(2+) overload in the cytosol and the SR in myotubes. Involved in glucose uptake into skeletal muscles and muscle performance by activating PI3K and mTORC2-mediated AKT1 phosphorylation signaling pathways, possibly through the action of its downstream catalytic product all-trans-retinoic acid. In Rattus norvegicus (Rat), this protein is Dehydrogenase/reductase SDR family member 7C.